Consider the following 118-residue polypeptide: Immunoglobulin lambda variable 2-8 (118 aa).

The N-terminal stretch at 1–19 (MAWALLLLTLLTQGTGSWA) is a signal peptide. Gln20 carries the pyrrolidone carboxylic acid modification. The tract at residues 20-44 (QSALTQPPSASGSPGQSVTISCTGT) is framework-1. Residues 20–118 (QSALTQPPSA…CSSYAGSNNF (99 aa)) form the Ig-like domain. An intrachain disulfide couples Cys41 to Cys109. The segment at 45–53 (SSDVGGYNY) is complementarity-determining-1. Positions 54–70 (VSWYQQHPGKAPKLMIY) are framework-2. Residues 71–73 (EVS) are complementarity-determining-2. The tract at residues 74–109 (KRPSGVPDRFSGSKSGNTASLTVSGLQAEDEADYYC) is framework-3. The interval 76–97 (PSGVPDRFSGSKSGNTASLTVS) is disordered. Residues 85–97 (GSKSGNTASLTVS) show a composition bias toward polar residues. Residues 110–118 (SSYAGSNNF) are complementarity-determining-3.

Immunoglobulins are composed of two identical heavy chains and two identical light chains; disulfide-linked.

The protein resides in the secreted. It localises to the cell membrane. In terms of biological role, v region of the variable domain of immunoglobulin light chains that participates in the antigen recognition. Immunoglobulins, also known as antibodies, are membrane-bound or secreted glycoproteins produced by B lymphocytes. In the recognition phase of humoral immunity, the membrane-bound immunoglobulins serve as receptors which, upon binding of a specific antigen, trigger the clonal expansion and differentiation of B lymphocytes into immunoglobulins-secreting plasma cells. Secreted immunoglobulins mediate the effector phase of humoral immunity, which results in the elimination of bound antigens. The antigen binding site is formed by the variable domain of one heavy chain, together with that of its associated light chain. Thus, each immunoglobulin has two antigen binding sites with remarkable affinity for a particular antigen. The variable domains are assembled by a process called V-(D)-J rearrangement and can then be subjected to somatic hypermutations which, after exposure to antigen and selection, allow affinity maturation for a particular antigen. This chain is Immunoglobulin lambda variable 2-8, found in Homo sapiens (Human).